A 116-amino-acid chain; its full sequence is Large ribosomal subunit protein bL17 (116 aa).

The protein belongs to the bacterial ribosomal protein bL17 family. In terms of assembly, part of the 50S ribosomal subunit. Contacts protein L32.

The polypeptide is Large ribosomal subunit protein bL17 (Acaryochloris marina (strain MBIC 11017)).